A 165-amino-acid chain; its full sequence is Chorismate pyruvate-lyase (165 aa).

Substrate is bound by residues M35, R77, L115, and E156.

This sequence belongs to the UbiC family. As to quaternary structure, monomer.

Its subcellular location is the cytoplasm. The enzyme catalyses chorismate = 4-hydroxybenzoate + pyruvate. The protein operates within cofactor biosynthesis; ubiquinone biosynthesis. Functionally, removes the pyruvyl group from chorismate, with concomitant aromatization of the ring, to provide 4-hydroxybenzoate (4HB) for the ubiquinone pathway. The polypeptide is Chorismate pyruvate-lyase (Escherichia coli O7:K1 (strain IAI39 / ExPEC)).